The sequence spans 260 residues: Carbonic anhydrase 2 (260 aa).

The Alpha-carbonic anhydrase domain maps to 3-259 (HGWGYADHNG…LKDRKVCASF (257 aa)). Residue histidine 64 is the Proton donor/acceptor of the active site. 3 residues coordinate Zn(2+): histidine 94, histidine 96, and histidine 119. A substrate-binding site is contributed by 198 to 199 (TT).

It belongs to the alpha-carbonic anhydrase family. It depends on Zn(2+) as a cofactor.

It is found in the cytoplasm. It carries out the reaction hydrogencarbonate + H(+) = CO2 + H2O. Catalyzes the reversible hydration of carbon dioxide. In Pseudaspius hakonensis (Big-scaled redfin), this protein is Carbonic anhydrase 2 (ca2).